A 316-amino-acid chain; its full sequence is Neuroguidin (316 aa).

2 disordered regions span residues 143–172 (SEAD…VKKY) and 280–316 (SALT…RKRH). Residues 145–157 (ADEGESDSGEDCA) show a composition bias toward acidic residues. Over residues 297 to 316 (KKSRKGPKKSKKRKGFRKRH) the composition is skewed to basic residues.

It belongs to the SAS10 family. In terms of assembly, part of the small subunit (SSU) processome, composed of more than 70 proteins and the RNA chaperone small nucleolar RNA (snoRNA) U3.

The protein resides in the nucleus. It is found in the nucleolus. Its subcellular location is the chromosome. It localises to the centromere. The protein localises to the cytoplasm. The protein resides in the cell projection. It is found in the axon. Its subcellular location is the dendrite. It localises to the filopodium. Its function is as follows. Part of the small subunit (SSU) processome, first precursor of the small eukaryotic ribosomal subunit. During the assembly of the SSU processome in the nucleolus, many ribosome biogenesis factors, an RNA chaperone and ribosomal proteins associate with the nascent pre-rRNA and work in concert to generate RNA folding, modifications, rearrangements and cleavage as well as targeted degradation of pre-ribosomal RNA by the RNA exosome. Its dissociation from the complex determines the transition from state pre-A1 to state pre-A1*. May inhibit mRNA translation. The chain is Neuroguidin (ngdn) from Xenopus tropicalis (Western clawed frog).